The chain runs to 299 residues: DNA-binding transcriptional activator HetR (299 aa).

Residue Ser-152 is part of the active site.

It belongs to the peptidase S48 family. Homodimer; disulfide-linked.

Its function is as follows. Might be involved in temporal and/or spatial regulation of nitrogen fixation. Dimerization is required for DNA-binding. Has both a protease and a DNA-binding activity. This Leptolyngbya boryana (Plectonema boryanum) protein is DNA-binding transcriptional activator HetR.